We begin with the raw amino-acid sequence, 236 residues long: Transcription repressor MYB6 (236 aa).

2 HTH myb-type domains span residues 9 to 61 (KAHT…INYL) and 62 to 116 (RPDL…KRKL). 2 consecutive DNA-binding regions (H-T-H motif) follow at residues 37–61 (WRSL…INYL) and 89–112 (WSLI…NTHI). The disordered stretch occupies residues 159–181 (PKTENSSDNGASTSGTTTDEDLR). The segment covering 162 to 175 (ENSSDNGASTSGTT) has biased composition (polar residues).

Interacts with BHLH012/MYC1 and BHLH042/TT8. Expressed in roots, stems, flower buds, and siliques.

It localises to the nucleus. This Arabidopsis thaliana (Mouse-ear cress) protein is Transcription repressor MYB6 (MYB6).